Reading from the N-terminus, the 240-residue chain is Ribitol-5-phosphate cytidylyltransferase (240 aa).

Residues phenylalanine 8 to glycine 11 and glycine 81 to serine 87 contribute to the CTP site.

This sequence belongs to the IspD/TarI cytidylyltransferase family. TarI subfamily.

The catalysed reaction is D-ribitol 5-phosphate + CTP + H(+) = CDP-L-ribitol + diphosphate. The protein operates within cell wall biogenesis; poly(ribitol phosphate) teichoic acid biosynthesis. Catalyzes the transfer of the cytidylyl group of CTP to D-ribitol 5-phosphate. This is Ribitol-5-phosphate cytidylyltransferase from Streptococcus agalactiae serotype V (strain ATCC BAA-611 / 2603 V/R).